Reading from the N-terminus, the 358-residue chain is MTLPRSEISAGDAVVFDAVSKRFPASGGNTAFTALDNVSLAVARGSITGIIGRSGAGKSTLIRLVNGLEKPSSGKVFVDGVDVGALDEAGLRDLRRSVGMIFQHFNLLSSRTVFGNVALPLEIAGMDRRAIEQRVRPLLELVGLADKHGRYPAELSGGQKQRIGIARALATEPKLLLSDEATSALDPETTQSILELLRRINAELGLTVLLITHEMEVVKAVTSDVAVIDKGEIVERGHTFDVFTHSRHETTRALLSGLAGSKLPEAVARGLKPAAASGDRVVVRLTFFGAAAERPLISQLIQSVGAEVNIIAGTIDEIGGKPYGSLVVAYGADAETSGKAERFFTENGLVTEVLGYVA.

The ABC transporter domain occupies 14 to 255; sequence VVFDAVSKRF…SRHETTRALL (242 aa). 52-59 is an ATP binding site; it reads GRSGAGKS.

It belongs to the ABC transporter superfamily. Methionine importer (TC 3.A.1.24) family. The complex is composed of two ATP-binding proteins (MetN), two transmembrane proteins (MetI) and a solute-binding protein (MetQ).

The protein resides in the cell inner membrane. It catalyses the reaction L-methionine(out) + ATP + H2O = L-methionine(in) + ADP + phosphate + H(+). The catalysed reaction is D-methionine(out) + ATP + H2O = D-methionine(in) + ADP + phosphate + H(+). Part of the ABC transporter complex MetNIQ involved in methionine import. Responsible for energy coupling to the transport system. The sequence is that of Methionine import ATP-binding protein MetN from Rhizobium meliloti (strain 1021) (Ensifer meliloti).